We begin with the raw amino-acid sequence, 182 residues long: Small ribosomal subunit protein uS5 (182 aa).

The S5 DRBM domain maps to 16 to 79; sequence FVDRLVHINR…ESAKRGMIYV (64 aa).

Belongs to the universal ribosomal protein uS5 family. Part of the 30S ribosomal subunit. Contacts proteins S4 and S8.

Functionally, with S4 and S12 plays an important role in translational accuracy. Located at the back of the 30S subunit body where it stabilizes the conformation of the head with respect to the body. This is Small ribosomal subunit protein uS5 from Bartonella henselae (strain ATCC 49882 / DSM 28221 / CCUG 30454 / Houston 1) (Rochalimaea henselae).